Reading from the N-terminus, the 64-residue chain is Conotoxin VnMLCL-05 (64 aa).

An N-terminal signal peptide occupies residues 1 to 19 (MLCLPVFIILLLLASPAAP). Residues 20 to 43 (NPLQTRIQSNLIRAGPEDANIKTD) constitute a propeptide that is removed on maturation. Residue lysine 63 is modified to Lysine amide.

The protein belongs to the conotoxin T superfamily. As to expression, expressed by the venom duct.

It is found in the secreted. This is Conotoxin VnMLCL-05 from Conus ventricosus (Mediterranean cone).